Consider the following 60-residue polypeptide: MKNYCGIITLFLAIISATGVFCVDFPNKGGKCDRKECRKTCKKLNYRGKCFPNYCRCFPG.

The N-terminal stretch at 1-22 is a signal peptide; that stretch reads MKNYCGIITLFLAIISATGVFC. Disulfide bonds link C32–C50, C37–C55, and C41–C57. The residue at position 59 (P59) is a Proline amide.

This sequence belongs to the short scorpion toxin superfamily. Potassium channel inhibitor family. As to expression, expressed by the venom gland.

It is found in the secreted. Its function is as follows. May block voltage-gated potassium channels (Kv). This Mesobuthus eupeus (Lesser Asian scorpion) protein is Potassium channel toxin MeuTXKalpha3.